Consider the following 265-residue polypeptide: Thiazole synthase (265 aa).

K106 functions as the Schiff-base intermediate with DXP in the catalytic mechanism. 1-deoxy-D-xylulose 5-phosphate is bound by residues G167, 193–194 (AG), and 215–216 (NS).

Belongs to the ThiG family. As to quaternary structure, homotetramer. Forms heterodimers with either ThiH or ThiS.

The protein localises to the cytoplasm. The catalysed reaction is [ThiS sulfur-carrier protein]-C-terminal-Gly-aminoethanethioate + 2-iminoacetate + 1-deoxy-D-xylulose 5-phosphate = [ThiS sulfur-carrier protein]-C-terminal Gly-Gly + 2-[(2R,5Z)-2-carboxy-4-methylthiazol-5(2H)-ylidene]ethyl phosphate + 2 H2O + H(+). The protein operates within cofactor biosynthesis; thiamine diphosphate biosynthesis. Functionally, catalyzes the rearrangement of 1-deoxy-D-xylulose 5-phosphate (DXP) to produce the thiazole phosphate moiety of thiamine. Sulfur is provided by the thiocarboxylate moiety of the carrier protein ThiS. In vitro, sulfur can be provided by H(2)S. This chain is Thiazole synthase, found in Prochlorococcus marinus (strain MIT 9515).